A 115-amino-acid polypeptide reads, in one-letter code: Large ribosomal subunit protein bL20 (115 aa).

The protein belongs to the bacterial ribosomal protein bL20 family.

Functionally, binds directly to 23S ribosomal RNA and is necessary for the in vitro assembly process of the 50S ribosomal subunit. It is not involved in the protein synthesizing functions of that subunit. The sequence is that of Large ribosomal subunit protein bL20 from Prochlorococcus marinus (strain MIT 9515).